Here is a 152-residue protein sequence, read N- to C-terminus: uncharacterized protein (152 aa).

The protein resides in the mitochondrion. This is an uncharacterized protein from Arabidopsis thaliana (Mouse-ear cress).